Here is a 384-residue protein sequence, read N- to C-terminus: Putative glutamate--cysteine ligase 2 (384 aa).

This sequence belongs to the glutamate--cysteine ligase type 2 family. YbdK subfamily.

It carries out the reaction L-cysteine + L-glutamate + ATP = gamma-L-glutamyl-L-cysteine + ADP + phosphate + H(+). Its function is as follows. ATP-dependent carboxylate-amine ligase which exhibits weak glutamate--cysteine ligase activity. The polypeptide is Putative glutamate--cysteine ligase 2 (Ruegeria pomeroyi (strain ATCC 700808 / DSM 15171 / DSS-3) (Silicibacter pomeroyi)).